Here is a 255-residue protein sequence, read N- to C-terminus: Cytochrome c oxidase subunit 2 (255 aa).

The N-terminal stretch at 1-16 is a signal peptide; sequence MFNLFPPFGANTAIFN. The Mitochondrial intermembrane segment spans residues 17–43; sequence DAPQPWQVGFQDGASPTQEGITELHDS. Residues 44–64 form a helical membrane-spanning segment; it reads IFFYLVIICFGVLWVLSSVIV. Topologically, residues 65–80 are mitochondrial matrix; that stretch reads NFNSNKSQLVYKYANH. Residues 81 to 101 traverse the membrane as a helical segment; that stretch reads GTLIELIWTITPALVLIAIAF. Residues 102-255 lie on the Mitochondrial intermembrane side of the membrane; that stretch reads PSFKLLYLMD…KYLAWIDSQA (154 aa). Cu cation contacts are provided by His-189, Cys-224, Glu-226, Cys-228, His-232, and Met-235. Residue Glu-226 coordinates Mg(2+).

The protein belongs to the cytochrome c oxidase subunit 2 family. Component of the cytochrome c oxidase (complex IV, CIV), a multisubunit enzyme composed of a catalytic core of 3 subunits and several supernumerary subunits. The complex exists as a monomer or a dimer and forms supercomplexes (SCs) in the inner mitochondrial membrane with ubiquinol-cytochrome c oxidoreductase (cytochrome b-c1 complex, complex III, CIII). Cu cation serves as cofactor.

It localises to the mitochondrion inner membrane. It catalyses the reaction 4 Fe(II)-[cytochrome c] + O2 + 8 H(+)(in) = 4 Fe(III)-[cytochrome c] + 2 H2O + 4 H(+)(out). Its function is as follows. Component of the cytochrome c oxidase, the last enzyme in the mitochondrial electron transport chain which drives oxidative phosphorylation. The respiratory chain contains 3 multisubunit complexes succinate dehydrogenase (complex II, CII), ubiquinol-cytochrome c oxidoreductase (cytochrome b-c1 complex, complex III, CIII) and cytochrome c oxidase (complex IV, CIV), that cooperate to transfer electrons derived from NADH and succinate to molecular oxygen, creating an electrochemical gradient over the inner membrane that drives transmembrane transport and the ATP synthase. Cytochrome c oxidase is the component of the respiratory chain that catalyzes the reduction of oxygen to water. Electrons originating from reduced cytochrome c in the intermembrane space (IMS) are transferred via the dinuclear copper A center (CU(A)) of subunit 2 and heme A of subunit 1 to the active site in subunit 1, a binuclear center (BNC) formed by heme A3 and copper B (CU(B)). The BNC reduces molecular oxygen to 2 water molecules using 4 electrons from cytochrome c in the IMS and 4 protons from the mitochondrial matrix. This chain is Cytochrome c oxidase subunit 2 (COX2), found in Mycosarcoma maydis (Corn smut fungus).